We begin with the raw amino-acid sequence, 384 residues long: Succinate--CoA ligase [ADP-forming] subunit beta (384 aa).

Positions 9 to 242 constitute an ATP-grasp domain; sequence KAILAQYKVP…LNEEDPLEVE (234 aa). ATP contacts are provided by residues K45, 52–54, E98, L101, and E106; that span reads GRG. Positions 197 and 211 each coordinate Mg(2+). Substrate is bound by residues N262 and 319–321; that span reads GIL.

It belongs to the succinate/malate CoA ligase beta subunit family. In terms of assembly, heterotetramer of two alpha and two beta subunits. It depends on Mg(2+) as a cofactor.

The catalysed reaction is succinate + ATP + CoA = succinyl-CoA + ADP + phosphate. It carries out the reaction GTP + succinate + CoA = succinyl-CoA + GDP + phosphate. It participates in carbohydrate metabolism; tricarboxylic acid cycle; succinate from succinyl-CoA (ligase route): step 1/1. Succinyl-CoA synthetase functions in the citric acid cycle (TCA), coupling the hydrolysis of succinyl-CoA to the synthesis of either ATP or GTP and thus represents the only step of substrate-level phosphorylation in the TCA. The beta subunit provides nucleotide specificity of the enzyme and binds the substrate succinate, while the binding sites for coenzyme A and phosphate are found in the alpha subunit. The chain is Succinate--CoA ligase [ADP-forming] subunit beta from Solibacter usitatus (strain Ellin6076).